The sequence spans 416 residues: Inositol polyphosphate multikinase (416 aa).

The tract at residues M1–G38 is disordered. A2 bears the N-acetylalanine mark. S7 carries the phosphoserine modification. Residue K75 participates in ATP binding. R82 is a substrate binding site. Residues E131–V133 and D144 each bind ATP. Substrate contacts are provided by residues K146, K160–K167, and Q196. Residues R320–H330 carry the Nuclear localization signal motif. Residue D385 coordinates ATP. H388 is a binding site for substrate.

This sequence belongs to the inositol phosphokinase (IPK) family. The cofactor is Mg(2+). In terms of tissue distribution, ubiquitous, with the highest expression in skeletal muscle, liver, placenta, lung, peripheral blood leukocytes, kidney, spleen and colon.

It localises to the nucleus. It carries out the reaction 1D-myo-inositol 1,4,5-trisphosphate + 2 ATP = 1D-myo-inositol 1,3,4,5,6-pentakisphosphate + 2 ADP + 2 H(+). The enzyme catalyses 1D-myo-inositol 1,3,4,6-tetrakisphosphate + ATP = 1D-myo-inositol 1,3,4,5,6-pentakisphosphate + ADP + H(+). The catalysed reaction is 1-octadecanoyl-2-(5Z,8Z,11Z,14Z)-eicosatetraenoyl-sn-glycero-3-phospho-1D-myo-inositol 4,5-bisphosphate + ATP = 1-octadecanoyl-2-(5Z,8Z,11Z,14Z-eicosatetraenoyl)-sn-glycero-3-phospho-(1D-myo-inositol 3,4,5-triphosphate) + ADP + H(+). It catalyses the reaction a 1,2-diacyl-sn-glycero-3-phospho-(1D-myo-inositol-4,5-bisphosphate) + ATP = a 1,2-diacyl-sn-glycero-3-phospho-(1D-myo-inositol-3,4,5-trisphosphate) + ADP + H(+). It carries out the reaction 1D-myo-inositol 1,4,5,6-tetrakisphosphate + ATP = 1D-myo-inositol 1,3,4,5,6-pentakisphosphate + ADP + H(+). The protein operates within phospholipid metabolism; phosphatidylinositol metabolism. Its activity is regulated as follows. Inhibited by flavonoids that occupy the ATP-binding pocket. Inhibited by myricetin, quercetin, luteolin, kaempferol, isorhamnetin and diosmetin, and to a lesser degree by rhamnetin and apigenin. Functionally, inositol phosphate kinase with a broad substrate specificity. Phosphorylates inositol 1,4,5-trisphosphate (Ins(1,4,5)P3) first to inositol 1,3,4,5-tetrakisphosphate and then to inositol 1,3,4,5,6-pentakisphosphate (Ins(1,3,4,5,6)P5). Phosphorylates inositol 1,3,4,6-tetrakisphosphate (Ins(1,3,4,6)P4). Phosphorylates inositol 1,4,5,6-tetrakisphosphate (Ins(1,4,5,6)P4). Phosphorylates glycero-3-phospho-1D-myo-inositol 4,5-bisphosphate to glycero-3-phospho-1D-myo-inositol 3,4,5-trisphosphate. Plays an important role in MLKL-mediated necroptosis via its role in the biosynthesis of inositol pentakisphosphate (InsP5) and inositol hexakisphosphate (InsP6). Binding of these highly phosphorylated inositol phosphates to MLKL mediates the release of an N-terminal auto-inhibitory region, leading to activation of the kinase. Essential for activated phospho-MLKL to oligomerize and localize to the cell membrane during necroptosis. Required for normal embryonic development, probably via its role in the biosynthesis of inositol 1,3,4,5,6-pentakisphosphate (Ins(1,3,4,5,6)P5) and inositol hexakisphosphate (InsP6). This chain is Inositol polyphosphate multikinase (IPMK), found in Homo sapiens (Human).